The primary structure comprises 678 residues: Glycine--tRNA ligase beta subunit (678 aa).

It belongs to the class-II aminoacyl-tRNA synthetase family. Tetramer of two alpha and two beta subunits.

The protein resides in the cytoplasm. The enzyme catalyses tRNA(Gly) + glycine + ATP = glycyl-tRNA(Gly) + AMP + diphosphate. This Streptococcus thermophilus (strain ATCC BAA-491 / LMD-9) protein is Glycine--tRNA ligase beta subunit.